We begin with the raw amino-acid sequence, 730 residues long: Elongation factor 2 (730 aa).

Residues 19-229 (DYIRNIGIVA…NITFKDIIQY (211 aa)) form the tr-type G domain. Residues 28 to 35 (AHIDHGKT), 94 to 98 (DTPGH), and 148 to 151 (NKVD) each bind GTP. Histidine 597 is modified (diphthamide).

This sequence belongs to the TRAFAC class translation factor GTPase superfamily. Classic translation factor GTPase family. EF-G/EF-2 subfamily.

It is found in the cytoplasm. Catalyzes the GTP-dependent ribosomal translocation step during translation elongation. During this step, the ribosome changes from the pre-translocational (PRE) to the post-translocational (POST) state as the newly formed A-site-bound peptidyl-tRNA and P-site-bound deacylated tRNA move to the P and E sites, respectively. Catalyzes the coordinated movement of the two tRNA molecules, the mRNA and conformational changes in the ribosome. This is Elongation factor 2 from Methanosphaera stadtmanae (strain ATCC 43021 / DSM 3091 / JCM 11832 / MCB-3).